Reading from the N-terminus, the 363-residue chain is Ribosomal RNA large subunit methyltransferase M (363 aa).

Residues Ser187, 220–223 (CPGG), Asp239, Asp259, and Asp276 contribute to the S-adenosyl-L-methionine site. Lys305 acts as the Proton acceptor in catalysis.

The protein belongs to the class I-like SAM-binding methyltransferase superfamily. RNA methyltransferase RlmE family. RlmM subfamily. Monomer.

It localises to the cytoplasm. It catalyses the reaction cytidine(2498) in 23S rRNA + S-adenosyl-L-methionine = 2'-O-methylcytidine(2498) in 23S rRNA + S-adenosyl-L-homocysteine + H(+). Its function is as follows. Catalyzes the 2'-O-methylation at nucleotide C2498 in 23S rRNA. The polypeptide is Ribosomal RNA large subunit methyltransferase M (Shewanella loihica (strain ATCC BAA-1088 / PV-4)).